The chain runs to 218 residues: 3-dehydroquinate dehydratase (218 aa).

3-dehydroquinate is bound by residues 29 to 31 (EFR) and Arg56. Residue His116 is the Proton donor/acceptor of the active site. The Schiff-base intermediate with substrate role is filled by Lys142. 3-dehydroquinate-binding residues include Arg180, Ser200, and Gln204.

Belongs to the type-I 3-dehydroquinase family. As to quaternary structure, homodimer.

The enzyme catalyses 3-dehydroquinate = 3-dehydroshikimate + H2O. It functions in the pathway metabolic intermediate biosynthesis; chorismate biosynthesis; chorismate from D-erythrose 4-phosphate and phosphoenolpyruvate: step 3/7. Functionally, involved in the third step of the chorismate pathway, which leads to the biosynthesis of aromatic amino acids. Catalyzes the cis-dehydration of 3-dehydroquinate (DHQ) and introduces the first double bond of the aromatic ring to yield 3-dehydroshikimate. This is 3-dehydroquinate dehydratase from Methanococcus maripaludis (strain DSM 14266 / JCM 13030 / NBRC 101832 / S2 / LL).